The primary structure comprises 330 residues: Lymphocyte-specific protein 1 (330 aa).

Basic and acidic residues-rich tracts occupy residues 1 to 20 (MAEA…HAED) and 37 to 62 (AREQ…DGGH). Disordered stretches follow at residues 1-246 (MAEA…SIEL) and 281-302 (DMSK…TIKS). Polar residues predominate over residues 66–77 (QPGQQTLISLKS). Serine 77 and serine 78 each carry phosphoserine; by CK2. Basic and acidic residues predominate over residues 113-135 (QSERPEEKQTEESSHQAKVHLEE). Threonine 166 carries the phosphothreonine modification. Phosphoserine is present on residues serine 168, serine 179, serine 180, and serine 184. 2 stretches are compositionally biased toward polar residues: residues 206-215 (VKKSQPTLPI) and 223-242 (QQYT…SRQP). Serine 243 is modified (phosphoserine; by MAPKAPK2). The span at 291-302 (KGGSKISSTIKS) shows a compositional bias: low complexity. An N6-acetyllysine modification is found at lysine 318.

In terms of processing, phosphorylated by casein kinase II, protein kinase C and MAPKAPK2. Phosphorylation by PKC induces translocation from membrane to cytoplasm. Phosphorylation by MAPKAPK2 may regulate neutrophil chemotaxis. In terms of tissue distribution, isoform 1 is expressed in normal mouse B and T-lymphocytes and in transformed B-cells but not (or in smaller amounts) in nine T-lymphoma lines tested. Isoform 2 is expressed in non-lymphoid cell lines (myocytes, stromal cells, fibroblasts).

It localises to the cell membrane. In terms of biological role, may play a role in mediating neutrophil activation and chemotaxis. This chain is Lymphocyte-specific protein 1 (Lsp1), found in Mus musculus (Mouse).